The sequence spans 180 residues: ATP-dependent protease subunit HslV (180 aa).

Thr6 is a catalytic residue. 3 residues coordinate Na(+): Ala164, Cys167, and Thr170.

Belongs to the peptidase T1B family. HslV subfamily. A double ring-shaped homohexamer of HslV is capped on each side by a ring-shaped HslU homohexamer. The assembly of the HslU/HslV complex is dependent on binding of ATP.

Its subcellular location is the cytoplasm. The enzyme catalyses ATP-dependent cleavage of peptide bonds with broad specificity.. Allosterically activated by HslU binding. Functionally, protease subunit of a proteasome-like degradation complex believed to be a general protein degrading machinery. The sequence is that of ATP-dependent protease subunit HslV from Borrelia hermsii (strain HS1 / DAH).